Reading from the N-terminus, the 244-residue chain is Small ribosomal subunit protein uS2 (244 aa).

The segment at 224–244 is disordered; that stretch reads GQQGSDEAEEAEEAAEEVVAE. The segment covering 229–244 has biased composition (acidic residues); sequence DEAEEAEEAAEEVVAE.

Belongs to the universal ribosomal protein uS2 family.

This Desulfitobacterium hafniense (strain DSM 10664 / DCB-2) protein is Small ribosomal subunit protein uS2.